A 188-amino-acid polypeptide reads, in one-letter code: dCTP deaminase (188 aa).

Residues 111-116, 135-137, Gln156, Tyr170, and Gln180 contribute to the dCTP site; these read KSTYAR and TLE. Glu137 acts as the Proton donor/acceptor in catalysis.

It belongs to the dCTP deaminase family. In terms of assembly, homotrimer.

The enzyme catalyses dCTP + H2O + H(+) = dUTP + NH4(+). It functions in the pathway pyrimidine metabolism; dUMP biosynthesis; dUMP from dCTP (dUTP route): step 1/2. Catalyzes the deamination of dCTP to dUTP. This is dCTP deaminase from Nitrosomonas eutropha (strain DSM 101675 / C91 / Nm57).